Consider the following 402-residue polypeptide: Arginine biosynthesis bifunctional protein ArgJ (402 aa).

The substrate site is built by Thr152, Lys178, Thr189, Glu275, Asn397, and Thr402. Thr189 acts as the Nucleophile in catalysis.

It belongs to the ArgJ family. Heterotetramer of two alpha and two beta chains.

It localises to the cytoplasm. It catalyses the reaction N(2)-acetyl-L-ornithine + L-glutamate = N-acetyl-L-glutamate + L-ornithine. The catalysed reaction is L-glutamate + acetyl-CoA = N-acetyl-L-glutamate + CoA + H(+). It participates in amino-acid biosynthesis; L-arginine biosynthesis; L-ornithine and N-acetyl-L-glutamate from L-glutamate and N(2)-acetyl-L-ornithine (cyclic): step 1/1. The protein operates within amino-acid biosynthesis; L-arginine biosynthesis; N(2)-acetyl-L-ornithine from L-glutamate: step 1/4. In terms of biological role, catalyzes two activities which are involved in the cyclic version of arginine biosynthesis: the synthesis of N-acetylglutamate from glutamate and acetyl-CoA as the acetyl donor, and of ornithine by transacetylation between N(2)-acetylornithine and glutamate. The chain is Arginine biosynthesis bifunctional protein ArgJ from Symbiobacterium thermophilum (strain DSM 24528 / JCM 14929 / IAM 14863 / T).